Consider the following 117-residue polypeptide: Immunoglobulin heavy variable 3-7 (117 aa).

Residues 1–19 (MELGLSWVFLVAILEGVQC) form the signal peptide. The tract at residues 20 to 44 (EVQLVESGGGLVQPGGSLRLSCAAS) is framework-1. The region spanning 20-117 (EVQLVESGGG…EDTAVYYCAR (98 aa)) is the Ig-like domain. A disulfide bond links Cys41 and Cys115. The complementarity-determining-1 stretch occupies residues 45 to 52 (GFTFSSYW). Positions 53–69 (MSWVRQAPGKGLEWVAN) are framework-2. The tract at residues 70-77 (IKQDGSEK) is complementarity-determining-2. The segment at 78–115 (YYVDSVKGRFTISRDNAKNSLYLQMNSLRAEDTAVYYC) is framework-3. The tract at residues 116–117 (AR) is complementarity-determining-3.

As to quaternary structure, immunoglobulins are composed of two identical heavy chains and two identical light chains; disulfide-linked.

It localises to the secreted. It is found in the cell membrane. Its function is as follows. V region of the variable domain of immunoglobulin heavy chains that participates in the antigen recognition. Immunoglobulins, also known as antibodies, are membrane-bound or secreted glycoproteins produced by B lymphocytes. In the recognition phase of humoral immunity, the membrane-bound immunoglobulins serve as receptors which, upon binding of a specific antigen, trigger the clonal expansion and differentiation of B lymphocytes into immunoglobulins-secreting plasma cells. Secreted immunoglobulins mediate the effector phase of humoral immunity, which results in the elimination of bound antigens. The antigen binding site is formed by the variable domain of one heavy chain, together with that of its associated light chain. Thus, each immunoglobulin has two antigen binding sites with remarkable affinity for a particular antigen. The variable domains are assembled by a process called V-(D)-J rearrangement and can then be subjected to somatic hypermutations which, after exposure to antigen and selection, allow affinity maturation for a particular antigen. The polypeptide is Immunoglobulin heavy variable 3-7 (Homo sapiens (Human)).